A 241-amino-acid chain; its full sequence is Triosephosphate isomerase (241 aa).

A substrate-binding site is contributed by 9 to 11; sequence NWK. H96 functions as the Electrophile in the catalytic mechanism. The Proton acceptor role is filled by E165. Substrate is bound by residues G171, S204, and 225 to 226; that span reads GG.

This sequence belongs to the triosephosphate isomerase family. Homodimer.

It is found in the cytoplasm. It carries out the reaction D-glyceraldehyde 3-phosphate = dihydroxyacetone phosphate. Its pathway is carbohydrate biosynthesis; gluconeogenesis. It participates in carbohydrate degradation; glycolysis; D-glyceraldehyde 3-phosphate from glycerone phosphate: step 1/1. In terms of biological role, involved in the gluconeogenesis. Catalyzes stereospecifically the conversion of dihydroxyacetone phosphate (DHAP) to D-glyceraldehyde-3-phosphate (G3P). In Trichodesmium erythraeum (strain IMS101), this protein is Triosephosphate isomerase.